Consider the following 918-residue polypeptide: Eukaryotic translation initiation factor 3 subunit C (918 aa).

The segment at 1-174 (MSRFFKGGSS…EEEGRRVVKS (174 aa)) is disordered. 5 positions are modified to phosphoserine: Ser10, Ser12, Ser16, Ser19, and Ser20. Composition is skewed to acidic residues over residues 36–47 (SSSEEESSEEES), 54–67 (ESSE…ESEV), and 79–128 (EDSE…ESDE). Thr667 carries the phosphothreonine modification. The 176-residue stretch at 681 to 856 (FHMHINLELL…GAIIFERVEI (176 aa)) folds into the PCI domain. The segment at 879-918 (KLYEQKTQHTNPQENRRRDKGGSVKRRNERTENRNRSDMN) is disordered. The span at 907–918 (ERTENRNRSDMN) shows a compositional bias: basic and acidic residues.

It belongs to the eIF-3 subunit C family. In terms of assembly, component of the eukaryotic translation initiation factor 3 (eIF-3) complex. The eIF-3 complex appears to include tif32/eif3a, SPAC25G10.08/eif3b, tif33/eif3c, SPBC4C3.07/eif3f, tif35/eif3g and sum1/eif3i. This set of common subunits may also associate exclusively with either moe1/eif3d and int6/eif3e, or with SPAC821.05/eif3h and SPAC1751.03/eif3m. The eIF-3 complex may also include SPAC3A12.13c/eif3j.

The protein resides in the cytoplasm. Functionally, component of the eukaryotic translation initiation factor 3 (eIF-3) complex, which is involved in protein synthesis of a specialized repertoire of mRNAs and, together with other initiation factors, stimulates binding of mRNA and methionyl-tRNAi to the 40S ribosome. The eIF-3 complex specifically targets and initiates translation of a subset of mRNAs involved in cell proliferation. This is Eukaryotic translation initiation factor 3 subunit C (nip1) from Schizosaccharomyces pombe (strain 972 / ATCC 24843) (Fission yeast).